We begin with the raw amino-acid sequence, 559 residues long: BTB/POZ domain-containing protein At5g47800 (559 aa).

Residues 28-96 form the BTB domain; the sequence is NDLVIRINNT…CYDITINLSA (69 aa). Positions 199–476 constitute an NPH3 domain; sequence DWWTEDISDL…VQALFFDQES (278 aa). A Phosphotyrosine modification is found at Y417. Residues 477-489 are compositionally biased toward low complexity; that stretch reads GSKGASSRSESQE. Disordered stretches follow at residues 477-502 and 524-559; these read GSKG…TDEH and EGCK…SRDR. 2 stretches are compositionally biased toward basic and acidic residues: residues 492-502 and 524-541; these read TRGKETPTDEH and EGCK…DPKK.

The protein belongs to the NPH3 family.

The protein operates within protein modification; protein ubiquitination. Its function is as follows. May act as a substrate-specific adapter of an E3 ubiquitin-protein ligase complex (CUL3-RBX1-BTB) which mediates the ubiquitination and subsequent proteasomal degradation of target proteins. This is BTB/POZ domain-containing protein At5g47800 from Arabidopsis thaliana (Mouse-ear cress).